The following is a 129-amino-acid chain: DNA-directed RNA polymerase II subunit RPB9 (129 aa).

Zn(2+)-binding residues include Cys21, Cys24, Cys43, Cys46, Cys90, Cys93, Cys118, and Cys123. The segment at 21–46 (CQECNNMLYPKEDKENKILLYACRNC) adopts a C4-type zinc-finger fold. The TFIIS-type zinc finger occupies 86–128 (EDHACPKCSHREAVFFQAQTRRAEEEMRLYYVCTNQNCTHRWT).

This sequence belongs to the archaeal RpoM/eukaryotic RPA12/RPB9/RPC11 RNA polymerase family. In terms of assembly, component of the RNA polymerase II (Pol II) complex consisting of 12 subunits.

It localises to the nucleus. The protein localises to the nucleolus. In terms of biological role, DNA-dependent RNA polymerase catalyzes the transcription of DNA into RNA using the four ribonucleoside triphosphates as substrates. Component of RNA polymerase II which synthesizes mRNA precursors and many functional non-coding RNAs. Pol II is the central component of the basal RNA polymerase II transcription machinery. It is composed of mobile elements that move relative to each other. RPB9 is part of the upper jaw surrounding the central large cleft and thought to grab the incoming DNA template. In Drosophila melanogaster (Fruit fly), this protein is DNA-directed RNA polymerase II subunit RPB9.